The primary structure comprises 220 residues: MTKGILGRKIGMTQVFGENGELIPVTVVEAKENVVLQKKTVEVDGYNAIQVGFEDKKAYKKDAKSNKYANKPAEGHAKKADAAPKRFIREFRNVDVDAYEVGQEVSVDTFVAGDVIDVTGVSKGKGFQGAIKRHGQSRGPMSHGSHFHRAPGSVGMASDASRVFKGQKMPGRMGGNTVTVQNLEVVQVDTENKVILVKGNVPGPKKGLVEIRTSIKKGNK.

The disordered stretch occupies residues 130–156 (AIKRHGQSRGPMSHGSHFHRAPGSVGM).

The protein belongs to the universal ribosomal protein uL3 family. In terms of assembly, part of the 50S ribosomal subunit. Forms a cluster with proteins L14 and L19.

Functionally, one of the primary rRNA binding proteins, it binds directly near the 3'-end of the 23S rRNA, where it nucleates assembly of the 50S subunit. The sequence is that of Large ribosomal subunit protein uL3 from Staphylococcus aureus (strain Mu3 / ATCC 700698).